The sequence spans 44 residues: DNA-directed RNA polymerase subunit Rpo12 (44 aa).

Residues C8, C22, and C25 each contribute to the Zn(2+) site.

The protein belongs to the archaeal Rpo12/eukaryotic RPC10 RNA polymerase subunit family. As to quaternary structure, part of the RNA polymerase complex. Zn(2+) serves as cofactor.

Its subcellular location is the cytoplasm. It carries out the reaction RNA(n) + a ribonucleoside 5'-triphosphate = RNA(n+1) + diphosphate. Its function is as follows. DNA-dependent RNA polymerase (RNAP) catalyzes the transcription of DNA into RNA using the four ribonucleoside triphosphates as substrates. This Haloquadratum walsbyi (strain DSM 16790 / HBSQ001) protein is DNA-directed RNA polymerase subunit Rpo12.